The sequence spans 277 residues: MNKYTVKEIQALLQQIDDENAPLFKEIVQDERKSVQKLVARWYKQKKQEEQAKRQWQEMSRYERQLFEQGIEYIAGIDEAGRGPLAGPVVAAAVMLPKDAYIPGLNDSKKLSEAKREMLFHMIQSCAISIGIGVVTAAEIDEMNIYEATKKAMIKAVEQLSPKPDYLLIDAMTLPISTPQQSIVKGDANSVSIAASSIIAKVTRDHFMKQLAKQYPQYGFEKNMGYGTAQHLEAIRVYGTIDEHRRSFSPIKEMIEMKKEGKEYDQTHRQSIAGFSS.

The RNase H type-2 domain maps to 72–260; it reads EYIAGIDEAG…IKEMIEMKKE (189 aa). The a divalent metal cation site is built by aspartate 78, glutamate 79, and aspartate 170.

The protein belongs to the RNase HII family. Requires Mn(2+) as cofactor. The cofactor is Mg(2+).

Its subcellular location is the cytoplasm. It catalyses the reaction Endonucleolytic cleavage to 5'-phosphomonoester.. In terms of biological role, endonuclease that specifically degrades the RNA of RNA-DNA hybrids. The chain is Ribonuclease HII from Geobacillus sp. (strain WCH70).